The chain runs to 840 residues: Heat shock 70 kDa protein 4 (840 aa).

Position 53 is an N6-acetyllysine (Lys53). Ser76 is subject to Phosphoserine. Tyr89 and Tyr336 each carry phosphotyrosine. 2 positions are modified to phosphoserine: Ser393 and Ser415. At Lys430 the chain carries N6-acetyllysine. The tract at residues 506 to 575 is disordered; the sequence is NEEPMETDQN…QAKKAKVKTS (70 aa). The span at 514–533 shows a compositional bias: basic and acidic residues; it reads QNAKEEEKMQVDQEEPHAEE. Phosphothreonine is present on Thr538. Phosphoserine occurs at positions 546 and 647. At Tyr660 the chain carries Phosphotyrosine. Lys679 is modified (N6-acetyllysine). Phosphoserine is present on Ser756. An N6-methyllysine modification is found at Lys773. The interval 782 to 840 is disordered; that stretch reads IISKPKPKVEPPKEEQKNAEQNGPVDGQGDSPGPQAAEQGTDTAVPSDSDKKLPEMDID. Basic and acidic residues-rich tracts occupy residues 788–799 and 829–840; these read PKVEPPKEEQKN and DSDKKLPEMDID.

Belongs to the heat shock protein 70 family. Interacts with TJP1/ZO-1.

It localises to the cytoplasm. The sequence is that of Heat shock 70 kDa protein 4 (HSPA4) from Canis lupus familiaris (Dog).